The primary structure comprises 531 residues: Chaperonin GroEL 2 (531 aa).

ATP contacts are provided by residues 30–33 (TLGP), 87–91 (DGTTT), glycine 414, and aspartate 494.

The protein belongs to the chaperonin (HSP60) family. As to quaternary structure, forms a cylinder of 14 subunits composed of two heptameric rings stacked back-to-back. Interacts with the co-chaperonin GroES.

It localises to the cytoplasm. It carries out the reaction ATP + H2O + a folded polypeptide = ADP + phosphate + an unfolded polypeptide.. Functionally, together with its co-chaperonin GroES, plays an essential role in assisting protein folding. The GroEL-GroES system forms a nano-cage that allows encapsulation of the non-native substrate proteins and provides a physical environment optimized to promote and accelerate protein folding. The chain is Chaperonin GroEL 2 from Cutibacterium acnes (strain DSM 16379 / KPA171202) (Propionibacterium acnes).